The chain runs to 380 residues: Putative 8-amino-7-oxononanoate synthase (380 aa).

Substrate is bound at residue Arg18. Pyridoxal 5'-phosphate is bound at residue 106–107; the sequence is GY. Residue His131 participates in substrate binding. Residues Ser179, 205-208, and 236-239 each bind pyridoxal 5'-phosphate; these read DEAH and TFGK. Position 239 is an N6-(pyridoxal phosphate)lysine (Lys239). Thr352 provides a ligand contact to substrate.

This sequence belongs to the class-II pyridoxal-phosphate-dependent aminotransferase family. BioF subfamily. Homodimer. Requires pyridoxal 5'-phosphate as cofactor.

It catalyses the reaction 6-carboxyhexanoyl-[ACP] + L-alanine + H(+) = (8S)-8-amino-7-oxononanoate + holo-[ACP] + CO2. It participates in cofactor biosynthesis; biotin biosynthesis. Its function is as follows. Catalyzes the decarboxylative condensation of pimeloyl-[acyl-carrier protein] and L-alanine to produce 8-amino-7-oxononanoate (AON), [acyl-carrier protein], and carbon dioxide. The polypeptide is Putative 8-amino-7-oxononanoate synthase (bioF) (Neisseria gonorrhoeae (strain ATCC 700825 / FA 1090)).